We begin with the raw amino-acid sequence, 153 residues long: UPF0179 protein AF_2154 (153 aa).

Belongs to the UPF0179 family.

This chain is UPF0179 protein AF_2154, found in Archaeoglobus fulgidus (strain ATCC 49558 / DSM 4304 / JCM 9628 / NBRC 100126 / VC-16).